Here is a 215-residue protein sequence, read N- to C-terminus: Deoxyribose-phosphate aldolase (215 aa).

Residue D90 is the Proton donor/acceptor of the active site. K152 serves as the catalytic Schiff-base intermediate with acetaldehyde. The Proton donor/acceptor role is filled by K181.

The protein belongs to the DeoC/FbaB aldolase family. DeoC type 1 subfamily.

It is found in the cytoplasm. The enzyme catalyses 2-deoxy-D-ribose 5-phosphate = D-glyceraldehyde 3-phosphate + acetaldehyde. It functions in the pathway carbohydrate degradation; 2-deoxy-D-ribose 1-phosphate degradation; D-glyceraldehyde 3-phosphate and acetaldehyde from 2-deoxy-alpha-D-ribose 1-phosphate: step 2/2. Its function is as follows. Catalyzes a reversible aldol reaction between acetaldehyde and D-glyceraldehyde 3-phosphate to generate 2-deoxy-D-ribose 5-phosphate. This is Deoxyribose-phosphate aldolase from Ureaplasma parvum serovar 3 (strain ATCC 27815 / 27 / NCTC 11736).